The chain runs to 485 residues: NADH-quinone oxidoreductase subunit N (485 aa).

Transmembrane regions (helical) follow at residues 8–28 (LIAL…MLSI), 35–55 (FLNA…LWFV), 75–95 (LYTG…YPWL), 105–125 (FYLL…ANHL), 127–147 (ALFL…GYAF), 159–179 (YTIL…LVYA), 203–223 (LLAG…LVPF), 235–255 (PAPV…GVVM), 271–291 (VVLG…ALSQ), 297–317 (LLGY…IALQ), 326–346 (VGVY…VVSL), 374–394 (AVMT…GFIG), 408–430 (WWLV…RVAV), and 455–475 (IVVL…QPLI).

It belongs to the complex I subunit 2 family. In terms of assembly, NDH-1 is composed of 13 different subunits. Subunits NuoA, H, J, K, L, M, N constitute the membrane sector of the complex.

Its subcellular location is the cell inner membrane. It catalyses the reaction a quinone + NADH + 5 H(+)(in) = a quinol + NAD(+) + 4 H(+)(out). In terms of biological role, NDH-1 shuttles electrons from NADH, via FMN and iron-sulfur (Fe-S) centers, to quinones in the respiratory chain. The immediate electron acceptor for the enzyme in this species is believed to be ubiquinone. Couples the redox reaction to proton translocation (for every two electrons transferred, four hydrogen ions are translocated across the cytoplasmic membrane), and thus conserves the redox energy in a proton gradient. This chain is NADH-quinone oxidoreductase subunit N, found in Klebsiella pneumoniae subsp. pneumoniae (strain ATCC 700721 / MGH 78578).